The chain runs to 381 residues: Gustatory and pheromone receptor 39a, isoform C (381 aa).

Residues 1–37 (MDFQPGELCAYYRLCRYLGIFCIDYNPTKKKFRLRRS) are Cytoplasmic-facing. The helical transmembrane segment at 38 to 58 (VLCYIVHFALQAYLVGCISVM) threads the bilayer. The Extracellular segment spans residues 59-79 (VTYWRRCFKSELTTTGNHFDR). The chain crosses the membrane as a helical span at residues 80–100 (LVMVIALGILVVQNAWLIWLQ). Residues 101–129 (APHLRIVRQIEFYRRNHLANVRLLLPKRL) lie on the Cytoplasmic side of the membrane. The chain crosses the membrane as a helical span at residues 130-150 (LWLIIATNVVYMANFIKTCIF). The Extracellular segment spans residues 151–171 (EWLTDASRLFVITSLGFPLRY). The helical transmembrane segment at 172–192 (LVTSFTMGTYFCMVHIVRLVL) threads the bilayer. The Cytoplasmic portion of the chain corresponds to 193-239 (DWNQSQINAIIDESADLKMTSPNRLRLRVCLEMHDRLMLLCNDEISL). The chain crosses the membrane as a helical span at residues 240 to 260 (VYGFIAWLSWMFASLDVTGVI). The Extracellular portion of the chain corresponds to 261-271 (YLTMVIQTKKS). Residues 272 to 292 (IVLKLITNVVWLSPTFMTCAA) form a helical membrane-spanning segment. The Cytoplasmic portion of the chain corresponds to 293-350 (SFMSNRVTIQANKTAKMLTKVPRTGTGLDRMIEKFLLKNLRQKPILTAYGFFALDKST). The helical transmembrane segment at 351 to 371 (LFKLFTAIFTYMVILVQFKEM) threads the bilayer. At 372-381 (ENSTKSINKF) the chain is on the extracellular side. A glycan (N-linked (GlcNAc...) asparagine) is linked at N373.

Belongs to the insect chemoreceptor superfamily. Gustatory receptor (GR) family. Gr21a subfamily. In terms of tissue distribution, expressed in the adult labellar chemosensory neurons. In larvae, is expressed in neurons of the terminal external chemosensory organ, as well as in the dorsal pharyngeal sense organ.

The protein resides in the cell membrane. Gustatory receptor which mediates acceptance or avoidance behavior, depending on its substrates. Plays a role in sustaining courtship behavior in males, possibly through the reception of a stimulating arrestant pheromone. The chain is Gustatory and pheromone receptor 39a, isoform C (Gr39a) from Drosophila melanogaster (Fruit fly).